We begin with the raw amino-acid sequence, 307 residues long: Protein TIPIN homolog (307 aa).

Disordered regions lie at residues 1 to 50 (MASL…SQDA) and 252 to 279 (ASMD…LSNE). Positions 262–271 (PLPPSQPPTP) are enriched in pro residues.

The protein belongs to the CSM3 family.

Its subcellular location is the cytoplasm. The protein localises to the nucleus. In terms of biological role, required for normal progression of S-phase. Important for cell survival after DNA damage or replication stress. This is Protein TIPIN homolog from Drosophila melanogaster (Fruit fly).